Here is a 178-residue protein sequence, read N- to C-terminus: Nucleoside triphosphate/diphosphate phosphatase (178 aa).

Arg-23 acts as the Proton donor in catalysis. Mg(2+)-binding residues include Asn-87, Asp-103, Asp-105, Asp-107, Asp-120, and Glu-123.

It belongs to the Ntdp family. Requires Mg(2+) as cofactor.

The catalysed reaction is a ribonucleoside 5'-triphosphate + H2O = a ribonucleoside 5'-diphosphate + phosphate + H(+). The enzyme catalyses a ribonucleoside 5'-diphosphate + H2O = a ribonucleoside 5'-phosphate + phosphate + H(+). Its function is as follows. Has nucleoside phosphatase activity towards nucleoside triphosphates and nucleoside diphosphates. This chain is Nucleoside triphosphate/diphosphate phosphatase, found in Latilactobacillus sakei subsp. sakei (strain 23K) (Lactobacillus sakei subsp. sakei).